A 39-amino-acid chain; its full sequence is Conotoxin ArMSGL-013 (39 aa).

Positions 1 to 5 (RRSLT) are excised as a propeptide. Cystine bridges form between Cys12-Cys24, Cys16-Cys33, and Cys23-Cys37. Trp38 is subject to Tryptophan amide.

Belongs to the conotoxin O3 superfamily. Expressed by the venom duct.

The protein resides in the secreted. This is Conotoxin ArMSGL-013 from Conus arenatus (Sand-dusted cone).